Reading from the N-terminus, the 100-residue chain is Aspartyl/glutamyl-tRNA(Asn/Gln) amidotransferase subunit C (100 aa).

It belongs to the GatC family. Heterotrimer of A, B and C subunits.

The catalysed reaction is L-glutamyl-tRNA(Gln) + L-glutamine + ATP + H2O = L-glutaminyl-tRNA(Gln) + L-glutamate + ADP + phosphate + H(+). It carries out the reaction L-aspartyl-tRNA(Asn) + L-glutamine + ATP + H2O = L-asparaginyl-tRNA(Asn) + L-glutamate + ADP + phosphate + 2 H(+). Its function is as follows. Allows the formation of correctly charged Asn-tRNA(Asn) or Gln-tRNA(Gln) through the transamidation of misacylated Asp-tRNA(Asn) or Glu-tRNA(Gln) in organisms which lack either or both of asparaginyl-tRNA or glutaminyl-tRNA synthetases. The reaction takes place in the presence of glutamine and ATP through an activated phospho-Asp-tRNA(Asn) or phospho-Glu-tRNA(Gln). This chain is Aspartyl/glutamyl-tRNA(Asn/Gln) amidotransferase subunit C, found in Streptococcus pneumoniae (strain P1031).